Consider the following 229-residue polypeptide: UPF0319 protein Sbal223_2728 (229 aa).

Positions 1-21 (MKSLLPISSLLVLLGSASAFA) are cleaved as a signal peptide.

This sequence belongs to the UPF0319 family.

The protein is UPF0319 protein Sbal223_2728 of Shewanella baltica (strain OS223).